Consider the following 180-residue polypeptide: MNEETQTSELTNTDQGPQIEPGPISKWLNQKGLIHKLLEPDEIGIENLGVDPQQLFKIVSELKMNGFNYLQCQGGYDEGPGLSLVCFYHLMEMKDFNEGDKPREVRLKVFLDRNGSLRVPSLYKLFRGCDWQERETYDMFGINFDGHPHPKRLLMPEDWRGWPLRKDYIQPDFYEMQDAY.

Residues 1–16 (MNEETQTSELTNTDQG) show a composition bias toward polar residues. The disordered stretch occupies residues 1–23 (MNEETQTSELTNTDQGPQIEPGP).

It belongs to the complex I 30 kDa subunit family. In terms of assembly, NDH-1 can be composed of about 15 different subunits; different subcomplexes with different compositions have been identified which probably have different functions.

Its subcellular location is the cellular thylakoid membrane. It catalyses the reaction a plastoquinone + NADH + (n+1) H(+)(in) = a plastoquinol + NAD(+) + n H(+)(out). The catalysed reaction is a plastoquinone + NADPH + (n+1) H(+)(in) = a plastoquinol + NADP(+) + n H(+)(out). NDH-1 shuttles electrons from an unknown electron donor, via FMN and iron-sulfur (Fe-S) centers, to quinones in the respiratory and/or the photosynthetic chain. The immediate electron acceptor for the enzyme in this species is believed to be plastoquinone. Couples the redox reaction to proton translocation, and thus conserves the redox energy in a proton gradient. Cyanobacterial NDH-1 also plays a role in inorganic carbon-concentration. The sequence is that of NAD(P)H-quinone oxidoreductase subunit J from Prochlorococcus marinus (strain MIT 9211).